The chain runs to 332 residues: F-box/SPRY domain-containing protein 1 (332 aa).

Residues 1 to 82 (MAENDGETIV…RSPRRPEVSA (82 aa)) are disordered. Composition is skewed to polar residues over residues 15–28 (CNLT…SSGL) and 49–64 (NPSS…QLTP). In terms of domain architecture, F-box spans 79–127 (EVSASRLPLKVLNQIFQYLPLKDLRSAMLTCHSWNNALSMEDSDIWQYL). In terms of domain architecture, B30.2/SPRY spans 138-330 (SDPFLLAELG…VTMVYVGSPQ (193 aa)).

The protein belongs to the FBXO45/Fsn family. As to quaternary structure, component of an SCF (SKP1-CUL1-F-box protein) E3 ubiquitin ligase complex composed of cul-1, fsn-1, rpm-1 and skr-1. Interacts (via SPRY domain) with scd-2 (via cytoplasmic domain). Interacts (via SPRY domain) with convertase egl-3 (via C-terminus). As to expression, expressed in GABAergic neuromuscular junctions (NMJs).

It localises to the synapse. The protein operates within protein modification; protein ubiquitination. Functionally, component of a SCF (SKP1-CUL1-F-box protein) E3 ubiquitin ligase complex which is required for the restriction and/or maturation of synapses in GABAergic neuromuscular junction (NMJ) presynaptic neurons. Promotes NRJ synapse development and synaptic transmission by negatively regulating the daf-2/InsR pathway in muscles. By targeting convertase egl-3 for degradation, negatively modulates insulin-like protein ins-4 and ins-6 processing. May stabilize synapse formation by promoting the down-regulation of scd-2. Regulates axon termination in PLM and ALM neurons. The polypeptide is F-box/SPRY domain-containing protein 1 (fsn-1) (Caenorhabditis elegans).